Here is a 61-residue protein sequence, read N- to C-terminus: Small ribosomal subunit protein uS14B (61 aa).

C24, C27, C40, and C43 together coordinate Zn(2+).

Belongs to the universal ribosomal protein uS14 family. Zinc-binding uS14 subfamily. In terms of assembly, part of the 30S ribosomal subunit. Contacts proteins S3 and S10. Zn(2+) is required as a cofactor.

Functionally, binds 16S rRNA, required for the assembly of 30S particles and may also be responsible for determining the conformation of the 16S rRNA at the A site. This Lacticaseibacillus paracasei (strain ATCC 334 / BCRC 17002 / CCUG 31169 / CIP 107868 / KCTC 3260 / NRRL B-441) (Lactobacillus paracasei) protein is Small ribosomal subunit protein uS14B.